The following is a 260-amino-acid chain: MNTTLTDSQLDRWNQTGYIKLPEFLSEAETQNLREWVEEISAWPADDEKWMHHFEQTPSGVRPARTEYILAFHAGIRQLLTQGKIPDCAGALMGEPAILYKEKINYKYPGGGGYAAHQDAPAYEFIRNHITCSIAVDAATPENGCLFFTPELHQRGLLHLDKNGCIDREYADTLDWEPVPMQPGDALFFSSYAPHKSPPNETQQPRRTLYLTYNALAEGDLREEYYADKRRSFAQVDTTGGEKLKISKIGHFDGKPAQQT.

K107 lines the 2-oxoglutarate pocket. Residues H117, D119, and H195 each contribute to the Fe cation site.

It belongs to the PhyH family. Requires Fe(2+) as cofactor.

The catalysed reaction is methylphosphonate + 2-oxoglutarate + O2 = hydroxymethylphosphonate + succinate + CO2. Functionally, part of an oxidative pathway for utilization of methylphosphonic acid as a phosphate source. Catalyzes the conversion of methylphosphonic acid to hydroxymethylphosphonic acid. Is specific for the hydroxylation of methylphosphonate. The chain is Methylphosphonate hydroxylase from Gimesia maris (strain ATCC 29201 / DSM 8797 / 534-30) (Planctomyces maris).